The following is a 206-amino-acid chain: Putative archaetidylserine decarboxylase proenzyme (206 aa).

Ser-172 functions as the Schiff-base intermediate with substrate; via pyruvic acid in the catalytic mechanism. Ser-172 carries the post-translational modification Pyruvic acid (Ser); by autocatalysis.

This sequence belongs to the phosphatidylserine decarboxylase family. PSD-A subfamily. In terms of assembly, heterodimer of a large membrane-associated beta subunit and a small pyruvoyl-containing alpha subunit. It depends on pyruvate as a cofactor. In terms of processing, is synthesized initially as an inactive proenzyme. Formation of the active enzyme involves a self-maturation process in which the active site pyruvoyl group is generated from an internal serine residue via an autocatalytic post-translational modification. Two non-identical subunits are generated from the proenzyme in this reaction, and the pyruvate is formed at the N-terminus of the alpha chain, which is derived from the carboxyl end of the proenzyme. The post-translation cleavage follows an unusual pathway, termed non-hydrolytic serinolysis, in which the side chain hydroxyl group of the serine supplies its oxygen atom to form the C-terminus of the beta chain, while the remainder of the serine residue undergoes an oxidative deamination to produce ammonia and the pyruvoyl prosthetic group on the alpha chain.

The protein localises to the cell membrane. The enzyme catalyses archaetidylserine + H(+) = archaetidylethanolamine + CO2. Catalyzes the formation of archaetidylethanolamine (PtdEtn) from archaetidylserine (PtdSer). This chain is Putative archaetidylserine decarboxylase proenzyme, found in Methanocaldococcus jannaschii (strain ATCC 43067 / DSM 2661 / JAL-1 / JCM 10045 / NBRC 100440) (Methanococcus jannaschii).